The sequence spans 181 residues: CDP-archaeol synthase (181 aa).

5 helical membrane-spanning segments follow: residues 7–27 (VVVA…AVLA), 55–75 (AVGT…RPAA), 80–100 (GVVL…GAMV), 128–148 (FVVV…GDTF), and 150–170 (LPVL…TNGI).

Belongs to the CDP-archaeol synthase family. Requires Mg(2+) as cofactor.

It is found in the cell membrane. It catalyses the reaction 2,3-bis-O-(geranylgeranyl)-sn-glycerol 1-phosphate + CTP + H(+) = CDP-2,3-bis-O-(geranylgeranyl)-sn-glycerol + diphosphate. Its pathway is membrane lipid metabolism; glycerophospholipid metabolism. Functionally, catalyzes the formation of CDP-2,3-bis-(O-geranylgeranyl)-sn-glycerol (CDP-archaeol) from 2,3-bis-(O-geranylgeranyl)-sn-glycerol 1-phosphate (DGGGP) and CTP. This reaction is the third ether-bond-formation step in the biosynthesis of archaeal membrane lipids. This chain is CDP-archaeol synthase, found in Halobacterium salinarum (strain ATCC 29341 / DSM 671 / R1).